The following is a 178-amino-acid chain: Caveolin-1 (178 aa).

At serine 2 the chain carries N-acetylserine. Position 2 is a phosphoserine (serine 2). Residues serine 2–valine 94 form a required for homooligomerization region. Over serine 2–serine 104 the chain is Cytoplasmic. N6-acetyllysine; alternate is present on lysine 5. A Glycyl lysine isopeptide (Lys-Gly) (interchain with G-Cter in ubiquitin); alternate cross-link involves residue lysine 5. Tyrosine 6 carries the phosphotyrosine modification. A Phosphoserine modification is found at serine 9. The residue at position 14 (tyrosine 14) is a Phosphotyrosine; by ABL1. A Phosphotyrosine modification is found at tyrosine 25. Glycyl lysine isopeptide (Lys-Gly) (interchain with G-Cter in ubiquitin) cross-links involve residues lysine 26, lysine 30, lysine 39, lysine 47, and lysine 57. The segment at aspartate 82–valine 94 is interaction with CAVIN3. Positions serine 105–leucine 125 form an intramembrane region, helical. Residues tyrosine 126 to isoleucine 178 lie on the Cytoplasmic side of the membrane. The interacts with SPRY1, SPRY2, SPRY3 and SPRY4 stretch occupies residues valine 131–glutamine 142. 3 S-palmitoyl cysteine lipidation sites follow: cysteine 133, cysteine 143, and cysteine 156. Residues serine 149–tyrosine 160 are interacts with SPRY1, SPRY2, and SPRY4. The segment at phenylalanine 167 to isoleucine 178 is interacts with SPRY1, SPRY2, SPRY3 and SPRY4.

The protein belongs to the caveolin family. Homooligomer. Interacts with GLIPR2. Interacts with NOSTRIN. Interacts with SNAP25 and STX1A. Interacts (via the N-terminus) with DPP4; the interaction is direct. Interacts with CTNNB1, CDH1 and JUP. Interacts with PACSIN2; this interaction induces membrane tubulation. Interacts with SLC7A9. Interacts with BMX and BTK. Interacts with TGFBR1. Interacts with CAVIN3 (via leucine-zipper domain) in a cholesterol-sensitive manner. Interacts with CAVIN1. Interacts with EHD2 in a cholesterol-dependent manner. Forms a ternary complex with UBXN6 and VCP; mediates CAV1 targeting to lysosomes for degradation. Interacts with ABCG1; this interaction regulates ABCG1-mediated cholesterol efflux. Interacts with NEU3; this interaction enhances NEU3 sialidase activity within caveola. Interacts (via C-terminus) with SPRY1, SPRY2 (via C-terminus), SPRY3, and SPRY4. Interacts with IGFBP5; this interaction allows trafficking of IGFBP5 from the plasma membrane to the nucleus. Phosphorylated at Tyr-14 by ABL1 in response to oxidative stress. In terms of processing, ubiquitinated. Undergo monoubiquitination and multi- and/or polyubiquitination. Monoubiquitination of N-terminal lysines promotes integration in a ternary complex with UBXN6 and VCP which promotes oligomeric CAV1 targeting to lysosomes for degradation. Ubiquitinated by ZNRF1; leading to degradation and modulation of the TLR4-mediated immune response.

Its subcellular location is the golgi apparatus membrane. The protein localises to the cell membrane. The protein resides in the membrane. It localises to the caveola. It is found in the membrane raft. Functionally, may act as a scaffolding protein within caveolar membranes. Forms a stable heterooligomeric complex with CAV2 that targets to lipid rafts and drives caveolae formation. Mediates the recruitment of CAVIN proteins (CAVIN1/2/3/4) to the caveolae. Interacts directly with G-protein alpha subunits and can functionally regulate their activity. Involved in the costimulatory signal essential for T-cell receptor (TCR)-mediated T-cell activation. Its binding to DPP4 induces T-cell proliferation and NF-kappa-B activation in a T-cell receptor/CD3-dependent manner. Recruits CTNNB1 to caveolar membranes and may regulate CTNNB1-mediated signaling through the Wnt pathway. Negatively regulates TGFB1-mediated activation of SMAD2/3 by mediating the internalization of TGFBR1 from membrane rafts leading to its subsequent degradation. Binds 20(S)-hydroxycholesterol (20(S)-OHC). This chain is Caveolin-1 (CAV1), found in Atelerix albiventris (Middle-African hedgehog).